A 193-amino-acid chain; its full sequence is GTP cyclohydrolase-2 (193 aa).

45 to 49 (RIHSE) serves as a coordination point for GTP. Residues Cys50, Cys61, and Cys63 each contribute to the Zn(2+) site. GTP is bound by residues Gln66, 87-89 (EGR), and Thr109. The active-site Proton acceptor is Asp121. The Nucleophile role is filled by Arg123. Thr144 and Lys149 together coordinate GTP.

This sequence belongs to the GTP cyclohydrolase II family. Requires Zn(2+) as cofactor.

It catalyses the reaction GTP + 4 H2O = 2,5-diamino-6-hydroxy-4-(5-phosphoribosylamino)-pyrimidine + formate + 2 phosphate + 3 H(+). It functions in the pathway cofactor biosynthesis; riboflavin biosynthesis; 5-amino-6-(D-ribitylamino)uracil from GTP: step 1/4. Functionally, catalyzes the conversion of GTP to 2,5-diamino-6-ribosylamino-4(3H)-pyrimidinone 5'-phosphate (DARP), formate and pyrophosphate. The protein is GTP cyclohydrolase-2 of Campylobacter hominis (strain ATCC BAA-381 / DSM 21671 / CCUG 45161 / LMG 19568 / NCTC 13146 / CH001A).